The primary structure comprises 439 residues: GTPase Der (439 aa).

2 EngA-type G domains span residues 4 to 168 (PIVA…KDDE) and 177 to 352 (INIA…DNYT). GTP contacts are provided by residues 10–17 (GRPNVGKS), 57–61 (DTGGI), 120–123 (NKID), 183–190 (GKPNVGKS), 230–234 (DTAGL), and 295–298 (NKWD). The KH-like domain maps to 353–437 (KRVKTGVLND…GIKLEFRERK (85 aa)).

It belongs to the TRAFAC class TrmE-Era-EngA-EngB-Septin-like GTPase superfamily. EngA (Der) GTPase family. As to quaternary structure, associates with the 50S ribosomal subunit.

GTPase that plays an essential role in the late steps of ribosome biogenesis. This is GTPase Der from Clostridium botulinum (strain Kyoto / Type A2).